A 462-amino-acid chain; its full sequence is Asparagine--tRNA ligase (462 aa).

It belongs to the class-II aminoacyl-tRNA synthetase family. As to quaternary structure, homodimer.

Its subcellular location is the cytoplasm. The catalysed reaction is tRNA(Asn) + L-asparagine + ATP = L-asparaginyl-tRNA(Asn) + AMP + diphosphate + H(+). The sequence is that of Asparagine--tRNA ligase from Synechocystis sp. (strain ATCC 27184 / PCC 6803 / Kazusa).